The primary structure comprises 1189 residues: Pumilio homolog 1 (1189 aa).

S2 is subject to N-acetylserine. S19 carries the post-translational modification Phosphoserine. Positions 22–73 (LKHHPQEPANPNMPVVLTSGTGSQAQPQPAANQALAAGTHSSPVPGSIGVAG) are disordered. Over residues 45-58 (QAQPQPAANQALAA) the composition is skewed to low complexity. Phosphoserine is present on residues S75, S98, and S106. T112 carries the post-translational modification Phosphothreonine. A phosphoserine mark is found at S124, S159, S197, S209, and S229. Residues 233–272 (SCLRKGGFGPRDADSDENDKGEKKNKGTFDGDKLGDLKEE) are disordered. The segment covering 250–272 (NDKGEKKNKGTFDGDKLGDLKEE) has biased composition (basic and acidic residues). The residue at position 305 (S305) is a Phosphoserine. Low complexity predominate over residues 491–503 (QQSAPQAQQGQQQ). 2 disordered regions span residues 491-525 (QQSA…GQQT) and 614-647 (AGTT…SSFY). Residues 512–525 (RPLTPNQNQQGQQT) are compositionally biased toward polar residues. At T515 the chain carries Phosphothreonine. Positions 627-647 (QQPQPQPQQQPSNNLASSSFY) are enriched in low complexity. Phosphoserine occurs at positions 710 and 715. The segment at 743–773 (GPVGMPLPSQGPGHSQTPPPSLSSHGSSSSL) is disordered. Positions 764–773 (LSSHGSSSSL) are enriched in low complexity. R797 is subject to Omega-N-methylarginine. S807 and S823 each carry phosphoserine. The region spanning 829–1171 (GRSRLLEDFR…HILAKLEKYY (343 aa)) is the PUM-HD domain. Pumilio repeat units lie at residues 849–884 (EIAG…LVFN), 885–920 (EILQ…ALAE), 921–958 (RIRG…EMVR), 959–994 (ELDG…FIID), 995–1030 (AFKG…PILE), 1031–1066 (ELHQ…KIVA), 1067–1102 (EIRG…VLID), and 1106–1145 (TMND…IVMH). The tract at residues 864–868 (SRFIQ) is adenine-nucleotide binding in RNA target. The uracil-nucleotide binding in RNA target stretch occupies residues 900–904 (NYVIQ). Residues 936–940 (CRVIQ) are adenine-nucleotide binding in RNA target. The segment at 974 to 978 (NHVVQ) is non-specific-nucleotide binding in RNA target. The segment at 1010–1014 (CRVIQ) is adenine-nucleotide binding in RNA target. The segment at 1046–1050 (NYVIQ) is uracil-nucleotide binding in RNA target. Guanine-nucleotide binding in RNA target regions lie at residues 1082–1086 (SNVVE) and 1083–1086 (NVVE). A uracil-nucleotide binding in RNA target region spans residues 1125 to 1129 (NYVVQ).

In terms of assembly, recruits the CCR4-POP2-NOT deadenylase leading to translational inhibition and mRNA degradation. Interacts with TRIM71 (via NHL repeats) in an RNA-dependent manner. Post-translationally, phosphorylation at Ser-715 promotes RNA-binding activity. Following growth factor stimulation phosphorylated at Ser-715, promoting binding to the 3'-UTR of CDKN1B/p27 mRNA. As to expression, widely expressed. Expressed in brain, heart, kidney, liver, lung, skin, intestine, spleen, testis and thymus. Weakly or not expressed in muscles and stomach. Expressed at various stages of myeloid and lymphoid cell development. Highly expressed in testis. Expressed in all major brain regions (at protein level).

It is found in the cytoplasm. The protein resides in the P-body. The protein localises to the cytoplasmic granule. Functionally, sequence-specific RNA-binding protein that acts as a post-transcriptional repressor by binding the 3'-UTR of mRNA targets. Binds to an RNA consensus sequence, the Pumilio Response Element (PRE), 5'-UGUANAUA-3', that is related to the Nanos Response Element (NRE). Mediates post-transcriptional repression of transcripts via different mechanisms: acts via direct recruitment of the CCR4-POP2-NOT deadenylase leading to translational inhibition and mRNA degradation. Also mediates deadenylation-independent repression by promoting accessibility of miRNAs. Following growth factor stimulation, phosphorylated and binds to the 3'-UTR of CDKN1B/p27 mRNA, inducing a local conformational change that exposes miRNA-binding sites, promoting association of miR-221 and miR-222, efficient suppression of CDKN1B/p27 expression, and rapid entry to the cell cycle. Acts as a post-transcriptional repressor of E2F3 mRNAs by binding to its 3'-UTR and facilitating miRNA regulation. Represses a program of genes necessary to maintain genomic stability such as key mitotic, DNA repair and DNA replication factors. Its ability to repress those target mRNAs is regulated by the lncRNA NORAD (non-coding RNA activated by DNA damage) which, due to its high abundance and multitude of PUMILIO binding sites, is able to sequester a significant fraction of PUM1 and PUM2 in the cytoplasm. Involved in neuronal functions by regulating ATXN1 mRNA levels: acts by binding to the 3'-UTR of ATXN1 transcripts, leading to their down-regulation independently of the miRNA machinery. In testis, acts as a post-transcriptional regulator of spermatogenesis by binding to the 3'-UTR of mRNAs coding for regulators of p53/TP53. Involved in embryonic stem cell renewal by facilitating the exit from the ground state: acts by targeting mRNAs coding for naive pluripotency transcription factors and accelerates their down-regulation at the onset of differentiation. Binds specifically to miRNA MIR199A precursor, with PUM2, regulates miRNA MIR199A expression at a postranscriptional level. The protein is Pumilio homolog 1 of Mus musculus (Mouse).